The sequence spans 962 residues: Protein lin-36 (962 aa).

Disordered stretches follow at residues 1 to 53 (MSEE…ETEG) and 74 to 99 (TSSG…PREE). Positions 23–40 (DSHVTVHSVEQDSQHSGE) are enriched in basic and acidic residues. Residues 74 to 95 (TSSGEVLDESQVTPTKQASSSQ) show a composition bias toward polar residues. Residues 161-249 (LTHKPCTVCN…IEAFGVPVAI (89 aa)) form a THAP-type zinc finger. Composition is skewed to basic and acidic residues over residues 452 to 472 (KAEE…KHAE) and 534 to 570 (SHEE…DEQF). Disordered stretches follow at residues 452 to 575 (KAEE…KMVQ), 612 to 676 (IAAT…PEER), 744 to 788 (QEKG…SASS), and 932 to 962 (DPKW…DSQQ). Residues 626 to 637 (SSEQTPEPTTSQ) are compositionally biased toward low complexity. Basic and acidic residues predominate over residues 647–658 (KTKESAVQKVEK). Residues 939 to 951 (QQQQQQQQQQQEQ) show a composition bias toward low complexity. Residues 952 to 962 (FPGQGSSDSQQ) show a composition bias toward polar residues.

As to expression, expressed in vulval precursor P(3-8).p cells and their descendants, neurons of the head, tail and ventral cord, hypodermal and intestinal cells and germline cells.

The protein resides in the nucleus. Its function is as follows. Required to negatively regulate vulval development. Antagonizes Ras-mediated vulval induction. Acts cell autonomously. This is Protein lin-36 (lin-36) from Caenorhabditis elegans.